The following is a 420-amino-acid chain: Interleukin-5 receptor subunit alpha (420 aa).

The first 20 residues, 1 to 20 (MIIVAHVLLILLGATEILQA), serve as a signal peptide directing secretion. Topologically, residues 21 to 342 (DLLPDEKISL…NDEHKPLREW (322 aa)) are extracellular. Residues 32 to 123 (PPVNFTIKVT…ASAELHAPPG (92 aa)) form the Fibronectin type-III 1 domain. N-linked (GlcNAc...) asparagine glycosylation is found at asparagine 35 and asparagine 131. Intrachain disulfides connect cysteine 134–cysteine 155 and cysteine 182–cysteine 196. N-linked (GlcNAc...) asparagine glycans are attached at residues asparagine 216 and asparagine 244. A Fibronectin type-III 2 domain is found at 241–334 (PPLNVTAEIE…WSQPIYVGND (94 aa)). Cysteine 269 and cysteine 316 form a disulfide bridge. Positions 322-326 (WSEWS) match the WSXWS motif motif. The helical transmembrane segment at 343–362 (FVIVIMATICFILLILSLIC) threads the bilayer. The Cytoplasmic segment spans residues 363–420 (KICHLWIKLFPPIPAPKSNIKDLFVTTNYEKAGSSETEIEVICYIEKPGVETLEDSVF). A Box 1 motif motif is present at residues 371–379 (LFPPIPAPK).

It belongs to the type I cytokine receptor family. Type 5 subfamily. As to quaternary structure, interacts with IL5. Interacts with CSF2RB. Interacts with JAK2. Interacts with SDCBP. Expressed on eosinophils and basophils.

It is found in the membrane. Cell surface receptor that plays an important role in the survival, differentiation, and chemotaxis of eosinophils. Acts by forming a heterodimeric receptor with CSF2RB subunit and subsequently binding to interleukin-5. In unstimulated conditions, interacts constitutively with JAK2. Heterodimeric receptor activation leads to JAK2 stimulation and subsequent activation of the JAK-STAT pathway. This Homo sapiens (Human) protein is Interleukin-5 receptor subunit alpha (IL5RA).